The chain runs to 755 residues: MADDGLLLNFSLGDSNVIKAEPKLKGGTWRDRLSARKIAQHRSKGPRKPGDENTAPRVPRNPNQIEVSATRPQKRQRTDGGDGGRPQSHAQSNQPRQFISSLFTKNPEPKNVEEVKEEGPVEEAKPTNAPLIDGLDTFTNLGLSPSLAAHLLTKLELKAPTAIQKASISQLLKEDGDAFIQAETGSGKTLAYLLPLVQRIMTLSKPTTDATGQPIVHRDSGLFAIVLAPTRELCKQISVVLESLLRCAHWIVAGTVIGGEKKKSEKARLRKGLNILVATPGRLADHLENTKVLDVSNVRWLVLDEGDRLMELGFEEEIQGIVKKLDARQRPSRIPGIPTKRTTVLCSATMKMNVQKLGEISLKDAVHIKADPEDEDEKARLANKEEDSAYRVPAQLKQSYAVVAAKLRLVTLTAYLKRTFMRKGSVMKTIVFVSCADSVDFHFEVFTRKKQQTDDADASDEEKTEEKPLSPHGTIAPATAFSNPSNPVTLYRLHGSLPQNVRTSTLASFAKNREPSVLICTDVASRGLDLPNVDLVVEYDPAFSAEDHLHRIGRTARVGRDGRALVFLMPGCEENYVEILKRGYRDGGKALTRVDANDILKRGFGGNVEAGKKDWDVKATDWQCEVERWSLENPQYLEMARRAFQSHIRAYATHIAAERSMFNIKELHLGHLAKAFALRDRPSKINVPGLRQGKEETKKDFKAERRPAAGQKRKADGADMGDSKSSSSHDTATSAQKMRAKMKEHMAGASEFNLA.

Positions 28–128 (TWRDRLSARK…GPVEEAKPTN (101 aa)) are disordered. Residues 38–47 (IAQHRSKGPR) show a composition bias toward basic residues. Composition is skewed to polar residues over residues 61–71 (NPNQIEVSATR) and 88–104 (SHAQ…SLFT). Residues 107 to 125 (PEPKNVEEVKEEGPVEEAK) show a composition bias toward basic and acidic residues. A Q motif motif is present at residues 136 to 165 (DTFTNLGLSPSLAAHLLTKLELKAPTAIQK). In terms of domain architecture, Helicase ATP-binding spans 169-368 (SQLLKEDGDA…EISLKDAVHI (200 aa)). ATP is bound at residue 182 to 189 (AETGSGKT). Residues 304–307 (DEGD) carry the DEAD box motif. Residues 395-600 (QLKQSYAVVA…LTRVDANDIL (206 aa)) enclose the Helicase C-terminal domain. Disordered stretches follow at residues 452 to 481 (QTDD…ATAF) and 685 to 755 (INVP…FNLA). Residues 454–463 (DDADASDEEK) are compositionally biased toward acidic residues. Residues 692–717 (QGKEETKKDFKAERRPAAGQKRKADG) are compositionally biased toward basic and acidic residues. A compositionally biased stretch (low complexity) spans 718-735 (ADMGDSKSSSSHDTATSA).

Belongs to the DEAD box helicase family. DDX31/DBP7 subfamily.

It localises to the nucleus. Its subcellular location is the nucleolus. It carries out the reaction ATP + H2O = ADP + phosphate + H(+). Functionally, ATP-binding RNA helicase involved in the biogenesis of 60S ribosomal subunits and is required for the normal formation of 25S and 5.8S rRNAs. This Aspergillus clavatus (strain ATCC 1007 / CBS 513.65 / DSM 816 / NCTC 3887 / NRRL 1 / QM 1276 / 107) protein is ATP-dependent RNA helicase dbp7 (dbp7).